A 204-amino-acid polypeptide reads, in one-letter code: Translation initiation factor 2 subunit beta (204 aa).

Positions 146–204 (NLEEGQVLDVEIQSLSKRGDGVVKMGRYIMYVSNAKPGQSVKIKISRISGSIVFTERAE) constitute a TRAM domain.

This sequence belongs to the eIF-2-beta/eIF-5 family. Heterotrimer composed of an alpha, a beta and a gamma chain.

Its function is as follows. eIF-2 functions in the early steps of protein synthesis by forming a ternary complex with GTP and initiator tRNA. The polypeptide is Translation initiation factor 2 subunit beta (Methanoregula boonei (strain DSM 21154 / JCM 14090 / 6A8)).